Consider the following 306-residue polypeptide: Non-specific ribonucleoside hydrolase RihC (306 aa).

The active site involves H235.

The protein belongs to the IUNH family. RihC subfamily.

Its function is as follows. Hydrolyzes both purine and pyrimidine ribonucleosides with a broad-substrate specificity. The protein is Non-specific ribonucleoside hydrolase RihC of Salmonella paratyphi C (strain RKS4594).